The following is a 637-amino-acid chain: Biosynthetic arginine decarboxylase (637 aa).

Lys-110 is modified (N6-(pyridoxal phosphate)lysine). Ile-290–Tyr-300 is a binding site for substrate.

This sequence belongs to the Orn/Lys/Arg decarboxylase class-II family. SpeA subfamily. Requires Mg(2+) as cofactor. The cofactor is pyridoxal 5'-phosphate.

The enzyme catalyses L-arginine + H(+) = agmatine + CO2. Its function is as follows. Catalyzes the biosynthesis of agmatine from arginine. The chain is Biosynthetic arginine decarboxylase from Pseudomonas putida (strain ATCC 47054 / DSM 6125 / CFBP 8728 / NCIMB 11950 / KT2440).